A 274-amino-acid polypeptide reads, in one-letter code: Undecaprenyl-diphosphatase (274 aa).

A run of 7 helical transmembrane segments spans residues 4 to 24, 46 to 63, 82 to 102, 109 to 129, 184 to 204, 218 to 238, and 249 to 269; these read ILLL…FLPI, LFEI…VWEY, KFIL…LAFG, LFNP…ILWA, ATEF…FYQL, MWAV…RWLL, and FAWY…FGWV.

Belongs to the UppP family.

The protein resides in the cell inner membrane. The catalysed reaction is di-trans,octa-cis-undecaprenyl diphosphate + H2O = di-trans,octa-cis-undecaprenyl phosphate + phosphate + H(+). In terms of biological role, catalyzes the dephosphorylation of undecaprenyl diphosphate (UPP). Confers resistance to bacitracin. This Dechloromonas aromatica (strain RCB) protein is Undecaprenyl-diphosphatase.